The following is a 266-amino-acid chain: 3-methyl-2-oxobutanoate hydroxymethyltransferase 2 (266 aa).

Residues D45 and D84 each contribute to the Mg(2+) site. 3-methyl-2-oxobutanoate-binding positions include 45–46, D84, and K112; that span reads DS. A Mg(2+)-binding site is contributed by E114. E181 serves as the catalytic Proton acceptor.

Belongs to the PanB family. In terms of assembly, homodecamer; pentamer of dimers. It depends on Mg(2+) as a cofactor.

It is found in the cytoplasm. The catalysed reaction is 3-methyl-2-oxobutanoate + (6R)-5,10-methylene-5,6,7,8-tetrahydrofolate + H2O = 2-dehydropantoate + (6S)-5,6,7,8-tetrahydrofolate. It functions in the pathway cofactor biosynthesis; (R)-pantothenate biosynthesis; (R)-pantoate from 3-methyl-2-oxobutanoate: step 1/2. Catalyzes the reversible reaction in which hydroxymethyl group from 5,10-methylenetetrahydrofolate is transferred onto alpha-ketoisovalerate to form ketopantoate. The chain is 3-methyl-2-oxobutanoate hydroxymethyltransferase 2 from Pseudomonas fluorescens (strain ATCC BAA-477 / NRRL B-23932 / Pf-5).